The chain runs to 349 residues: Phosphate acetyltransferase (349 aa).

The protein belongs to the phosphate acetyltransferase and butyryltransferase family.

The protein localises to the cytoplasm. It carries out the reaction acetyl-CoA + phosphate = acetyl phosphate + CoA. Its pathway is metabolic intermediate biosynthesis; acetyl-CoA biosynthesis; acetyl-CoA from acetate: step 2/2. This is Phosphate acetyltransferase (pta) from Rickettsia typhi (strain ATCC VR-144 / Wilmington).